Reading from the N-terminus, the 493-residue chain is D-glyceraldehyde dehydrogenase (NADP(+)) (493 aa).

NADP(+)-binding positions include 144-147 (TPWN), Arg-155, 170-174 (KPSSD), 202-208 (KGSEIGD), 223-246 (GSTS…ILEL), Cys-279, and 379-381 (EIF). Substrate is bound by residues Asn-147 and Arg-155. The Proton acceptor role is filled by Glu-245. Cys-279 serves as a coordination point for substrate. The active-site Proton donor is the Cys-279.

The protein belongs to the aldehyde dehydrogenase family. Glyceraldehyde dehydrogenase subfamily. In terms of assembly, homotetramer. Dimer of dimers.

It carries out the reaction D-glyceraldehyde + NADP(+) + H2O = (R)-glycerate + NADPH + 2 H(+). It functions in the pathway carbohydrate degradation; glycolysis. With respect to regulation, stable for 2 hours at 60 degrees Celsius but activity is decreased to less than 50 percent within 15 minutes at 70 degrees Celsius. Its function is as follows. NADP-dependent dehydrogenase of the nED (non-phosphorylated Entner-Doudoroff) pathway with highest activity towards glyceraldehydes (e.g. D,L-glyceraldehyde and D-glyceraldehyde), to a lesser extent towards D,L-glyceraldehyde-3-phosphate and glycolaldehyde, but no activity towards aliphatic or aromatic aldehydes. The chain is D-glyceraldehyde dehydrogenase (NADP(+)) from Picrophilus torridus (strain ATCC 700027 / DSM 9790 / JCM 10055 / NBRC 100828 / KAW 2/3).